Consider the following 548-residue polypeptide: Membrane protein insertase YidC (548 aa).

The helical transmembrane segment at Asn6–Asp26 threads the bilayer. The segment at Asn28–Pro52 is disordered. Low complexity predominate over residues Pro29–Thr41. A run of 4 helical transmembrane segments spans residues Lys345 to Val365, Leu420 to Leu440, Leu458 to Ile478, and Pro499 to Val519.

The protein belongs to the OXA1/ALB3/YidC family. Type 1 subfamily. In terms of assembly, interacts with the Sec translocase complex via SecD. Specifically interacts with transmembrane segments of nascent integral membrane proteins during membrane integration.

The protein localises to the cell inner membrane. In terms of biological role, required for the insertion and/or proper folding and/or complex formation of integral membrane proteins into the membrane. Involved in integration of membrane proteins that insert both dependently and independently of the Sec translocase complex, as well as at least some lipoproteins. Aids folding of multispanning membrane proteins. The polypeptide is Membrane protein insertase YidC (Klebsiella pneumoniae subsp. pneumoniae (strain ATCC 700721 / MGH 78578)).